Reading from the N-terminus, the 401-residue chain is MNKIISVWKKMNLIRKIGIGVVLGVLLGLIAPKITVIALFGSLFVGALKAIAPLLVLTLVAHALSQAPAGQKSNMRTVICLYLFGTFAAAFIAVGASYLFPIKLVLSTTTTTDITPPQGIAEVFQDLLLKVVDNPINALATANYIGVLTWAAVFGLAFRHASKTTKDLLQSTAEVISKVVGWIIGLAPFGIMGLVFDTIANNGLTALKDYGLLLLLLVGSMIFVALVVNPLIAFLVMKKNPYPLVFECLRVSGVTAFFTRSSAANIPVNMQLCKRLGVDPDTYSVSIPLGATINMAGAAITINILTMAAVHTLGISVDFSSALLLSVVASLSAAGASGVAGGSLLLIPVACSLFGIPNELAMQVVGVGFVVGVIQDSCEAALNSSTDVLFTVVAERSAWKK.

The next 8 helical transmembrane spans lie at 17–37 (IGIG…ITVI), 40–60 (FGSL…LTLV), 78–98 (VICL…GASY), 138–158 (ALAT…GLAF), 179–199 (VVGW…FDTI), 212–232 (LLLL…NPLI), 295–315 (MAGA…TLGI), and 336–356 (ASGV…LFGI).

This sequence belongs to the dicarboxylate/amino acid:cation symporter (DAACS) (TC 2.A.23) family.

It is found in the cell membrane. It carries out the reaction L-serine(in) + Na(+)(in) = L-serine(out) + Na(+)(out). It catalyses the reaction L-threonine(in) + Na(+)(in) = L-threonine(out) + Na(+)(out). Involved in the import of serine and threonine into the cell, with the concomitant import of sodium (symport system). In Streptococcus suis (strain 98HAH33), this protein is Serine/threonine transporter SstT.